The sequence spans 467 residues: Cytochrome c-552 (467 aa).

An N-terminal signal peptide occupies residues 1–27 (MMKKMTGKSFALSALVAASFMAAGAMA). Residue His-87 participates in heme c binding. Positions 115, 118, and 119 each coordinate heme. Heme c contacts are provided by Cys-153, Cys-156, His-157, Cys-195, Cys-198, and His-199. The Ca(2+) site is built by Glu-201, Tyr-202, Lys-250, and Gln-252. Position 202 (Tyr-202) interacts with substrate. His-253 provides a ligand contact to substrate. Heme c is bound by residues His-264, Cys-271, Cys-274, His-275, His-290, Cys-303, Cys-306, His-307, and His-382.

Belongs to the cytochrome c-552 family. The cofactor is Ca(2+). Requires heme c as cofactor.

It localises to the periplasm. The catalysed reaction is 6 Fe(III)-[cytochrome c] + NH4(+) + 2 H2O = 6 Fe(II)-[cytochrome c] + nitrite + 8 H(+). Its pathway is nitrogen metabolism; nitrate reduction (assimilation). Catalyzes the reduction of nitrite to ammonia, consuming six electrons in the process. This is Cytochrome c-552 from Shewanella sp. (strain MR-4).